We begin with the raw amino-acid sequence, 511 residues long: Sodium/proline symporter (511 aa).

13 helical membrane passes run 16–36, 53–73, 84–104, 138–158, 173–193, 199–219, 239–259, 285–305, 326–346, 380–400, 409–429, 437–457, and 466–486; these read WQTYIMIAVYFLILMLLAFTY, IGPYITALSAGASDMSGWMIM, LSAMWITIGLTLGAYINYFVV, IISGLIIVVFFTLYTHSGFVS, FGLILVAFIVIFYTFFGGYLA, FFQGVIMLIAMVMVPIVAMMN, LFKGLSFIGIISLFSWGLGYF, ISWMAVGLLGAVAVGLTGIAF, VLFHPLVGGFLLAAILAAIMS, FVMIGRLSVLVVAIVAIAIAW, LVGNAWAGFGASFSPLVLFAL, AGAVSGMVSGALVVIVWIAWI, and IFGLYEIIPGFIVSVIVTYVV.

It belongs to the sodium:solute symporter (SSF) (TC 2.A.21) family.

It is found in the cell membrane. It catalyses the reaction L-proline(in) + Na(+)(in) = L-proline(out) + Na(+)(out). Catalyzes the sodium-dependent uptake of extracellular L-proline. Since most S.aureus strains are L-proline auxotrophs, this transporter may aid the bacterial persistence during an infection of tissues with low proline concentrations. This is Sodium/proline symporter from Staphylococcus aureus.